The sequence spans 114 residues: UPF0145 protein PF1756 (114 aa).

This sequence belongs to the UPF0145 family.

This chain is UPF0145 protein PF1756, found in Pyrococcus furiosus (strain ATCC 43587 / DSM 3638 / JCM 8422 / Vc1).